Consider the following 108-residue polypeptide: Peptidyl-prolyl cis-trans isomerase FKBP1B (108 aa).

Residues 20-108 (GQTCVVHYTG…IFDVELLNLE (89 aa)) form the PPIase FKBP-type domain.

As to quaternary structure, identified in a complex composed of RYR2, FKBP1B, PKA catalytic subunit, PRKAR2A, AKAP6, and the protein phosphatases PP2A and PP1. Interacts directly with RYR2.

It is found in the cytoplasm. Its subcellular location is the sarcoplasmic reticulum. The catalysed reaction is [protein]-peptidylproline (omega=180) = [protein]-peptidylproline (omega=0). Inhibited by both FK506 and rapamycin. Functionally, has the potential to contribute to the immunosuppressive and toxic effects of FK506 and rapamycin. PPIases accelerate the folding of proteins. It catalyzes the cis-trans isomerization of proline imidic peptide bonds in oligopeptides. The chain is Peptidyl-prolyl cis-trans isomerase FKBP1B (FKBP1B) from Bos taurus (Bovine).